A 549-amino-acid chain; its full sequence is Pleckstrin homology domain-containing family A member 8 (549 aa).

The PH domain occupies Met-1–Ala-93. 2 disordered regions span residues Asn-180–Ser-245 and Gln-257–Gln-312. The segment covering Lys-203 to Leu-219 has biased composition (basic and acidic residues). The span at Glu-276–Glu-288 shows a compositional bias: acidic residues. Over residues Glu-299–Gln-309 the composition is skewed to polar residues.

It localises to the cytoplasm. It is found in the golgi apparatus. Its subcellular location is the trans-Golgi network membrane. The protein localises to the membrane. Its function is as follows. Cargo transport protein that is required for apical transport from the trans-Golgi network (TGN) to the plasma membrane. This chain is Pleckstrin homology domain-containing family A member 8 (plekha8), found in Danio rerio (Zebrafish).